The chain runs to 151 residues: Large ribosomal subunit protein bL9 (151 aa).

This sequence belongs to the bacterial ribosomal protein bL9 family.

Binds to the 23S rRNA. This Lactobacillus delbrueckii subsp. bulgaricus (strain ATCC BAA-365 / Lb-18) protein is Large ribosomal subunit protein bL9.